A 146-amino-acid chain; its full sequence is Putative inactive cytochrome P450 2G1 (146 aa).

Cysteine 91 is a heme binding site.

Belongs to the cytochrome P450 family. The cofactor is heme.

The chain is Putative inactive cytochrome P450 2G1 (CYP2G1P) from Homo sapiens (Human).